The chain runs to 123 residues: DNA-directed RNA polymerase I subunit RPA12 (123 aa).

The Zn(2+) site is built by C17, C20, C35, C38, C84, and C87. Residues 17-38 (CPDCGSVLPLPGIQDTVICSRC) form a C4-type zinc finger. Residues 80–120 (IDRRCPRCGHEGMAYHTRQMRSADEGQTVFYTCINCKFQEK) form a TFIIS-type zinc finger. Residues 103–104 (DE) carry the Hairpin motif. Positions 112 and 115 each coordinate Zn(2+).

It belongs to the archaeal RpoM/eukaryotic RPA12/RPB9/RPC11 RNA polymerase family. In terms of assembly, component of the RNA polymerase I (Pol I) complex consisting of 13 subunits: a ten-subunit catalytic core composed of POLR1A/RPA1, POLR1B/RPA2, POLR1C/RPAC1, POLR1D/RPAC2, POLR1H/RPA12, POLR2E/RPABC1, POLR2F/RPABC2, POLR2H/RPABC3, POLR2K/RPABC4 and POLR2L/RPABC5; a mobile stalk subunit POLR1F/RPA43 protruding from the core and additional subunits homologous to general transcription factors POLR1E/RPA49 and POLR1G/RPA34. Part of Pol I pre-initiation complex (PIC), in which Pol I core assembles with RRN3 and promoter-bound UTBF and SL1/TIF-IB complex.

It localises to the nucleus. Its subcellular location is the nucleolus. Core component of RNA polymerase I (Pol I), a DNA-dependent RNA polymerase which synthesizes ribosomal RNA precursors using the four ribonucleoside triphosphates as substrates. Can mediate Pol I proofreading of the nascent RNA transcript. Anchors into the Pol I active site to monitor transcription fidelity and cleave mis-incorporated 5'-ribonucleotides. This chain is DNA-directed RNA polymerase I subunit RPA12, found in Mus musculus (Mouse).